The following is a 216-amino-acid chain: Heart- and neural crest derivatives-expressed protein 1 (216 aa).

Disordered regions lie at residues 1–20, 53–109, and 165–203; these read MNLV…HPPH, APDF…RTES, and ELKK…KGRT. The span at 8 to 18 shows a compositional bias: basic residues; the sequence is AHHHHHHHSHP. Residues 65–78 are compositionally biased toward low complexity; the sequence is TAVAAAAYGPDARP. Positions 92-104 are enriched in basic residues; that stretch reads LPKRKGSGPKKER. Residues 94 to 146 form the bHLH domain; that stretch reads KRKGSGPKKERRRTESINSAFAELRECIPNVPADTKLSKIKTLRLATSYIAYL. T107 carries the post-translational modification Phosphothreonine; by PLK4. At S109 the chain carries Phosphoserine; by PLK4. Basic and acidic residues predominate over residues 165–174; that stretch reads ELKKTDGGRE.

In terms of assembly, efficient DNA binding requires dimerization with another bHLH protein. Forms homodimers and heterodimers with TCF3 gene products E12 and E47, HAND2 and HEY1, HEY2 and HEYL (hairy-related transcription factors). Interacts with MDFIC. Interacts with SOX15; the interaction enhances HAND1-induced differentiation of trophoblast giant cells. In terms of processing, phosphorylation by PLK4 disrupts the interaction with MDFIC and leads to translocation into the nucleoplasm, allowing dimerization and transcription factor activity. Smooth muscle cells of the gut and adrenal tissue.

Its subcellular location is the nucleus. It is found in the nucleoplasm. It localises to the nucleolus. In terms of biological role, transcription factor that plays an essential role in both trophoblast giant cell differentiation and in cardiac morphogenesis. Binds the DNA sequence 5'-NRTCTG-3' (non-canonical E-box). Acts as a transcriptional repressor of SOX15. In the adult, could be required for ongoing expression of cardiac-specific genes. The chain is Heart- and neural crest derivatives-expressed protein 1 (Hand1) from Mus musculus (Mouse).